A 450-amino-acid chain; its full sequence is Nicotinamide phosphoribosyltransferase (450 aa).

Arg210 lines the diphosphate pocket. Asp233 contacts beta-nicotinamide D-ribonucleotide. Diphosphate-binding residues include His249 and Arg310. Beta-nicotinamide D-ribonucleotide contacts are provided by residues 310–312 (RAD), 364–365 (GD), and Arg403.

This sequence belongs to the NAPRTase family.

It carries out the reaction beta-nicotinamide D-ribonucleotide + diphosphate = 5-phospho-alpha-D-ribose 1-diphosphate + nicotinamide + H(+). It functions in the pathway cofactor biosynthesis; NAD(+) biosynthesis; nicotinamide D-ribonucleotide from 5-phospho-alpha-D-ribose 1-diphosphate and nicotinamide: step 1/1. Functionally, catalyzes the condensation of nicotinamide with 5-phosphoribosyl-1-pyrophosphate to yield nicotinamide mononucleotide, an intermediate in the biosynthesis of NAD. In Mycoplasma genitalium (strain ATCC 33530 / DSM 19775 / NCTC 10195 / G37) (Mycoplasmoides genitalium), this protein is Nicotinamide phosphoribosyltransferase.